A 362-amino-acid chain; its full sequence is Type-1 angiotensin II receptor A (362 aa).

The Extracellular portion of the chain corresponds to 1 to 26 (MSNASTVETSDVERIAVNCSKSGMHN). N-linked (GlcNAc...) asparagine glycosylation is found at Asn-3 and Asn-18. Cystine bridges form between Cys-19–Cys-273 and Cys-102–Cys-181. A helical membrane pass occupies residues 27-56 (YIFIAIPIIYSTIFVVGVFGNSMVVIVIYS). At 57 to 62 (YMKMKT) the chain is on the cytoplasmic side. A helical membrane pass occupies residues 63 to 90 (VASIFLMNLALSDLCFVITLPLWAAYTA). Residues 91–99 (MHYHWPFGN) lie on the Extracellular side of the membrane. The chain crosses the membrane as a helical span at residues 100–126 (FLCKVASTAITLNLYTTVFLLTCLSID). Residues 127 to 142 (RYSAIVHPMKSRIWRT) are Cytoplasmic-facing. A helical transmembrane segment spans residues 143–166 (AMVARLTCVGIWLVAFLASMPSII). At 167 to 191 (YRQIYLFHDTNQTVCAIVYDSGHIY) the chain is on the extracellular side. Arg-168 contacts angiotensin II. Asn-177 is a glycosylation site (N-linked (GlcNAc...) asparagine). Tyr-185 and Lys-200 together coordinate angiotensin II. The chain crosses the membrane as a helical span at residues 192–217 (FMVGMSLAKNIVGFLIPFLIILTSYT). Residues 218-238 (LIGKTLKEVYRAQRARNDDIF) lie on the Cytoplasmic side of the membrane. The helical transmembrane segment at 239 to 267 (KMIVAVVLLFFFCWIPYQVFTFLDVLIQM) threads the bilayer. Over 268-277 (DVIQNCKMYD) the chain is Extracellular. Residues 278–303 (IVDTGMPITICIAYFNSCLNPFLYGF) traverse the membrane as a helical segment. Residues 304–362 (FGKNFRKHFLQLIKYIPPKMRTHASVNTKSSLVSSSLSDTKRASKKIALQMTDNEEHCK) are Cytoplasmic-facing. The S-palmitoyl cysteine moiety is linked to residue Cys-361.

Belongs to the G-protein coupled receptor 1 family. In terms of processing, C-terminal Ser or Thr residues may be phosphorylated. As to expression, expressed in lung, liver, kidney, and spleen, with highest expression in the heart.

The protein localises to the cell membrane. Receptor for angiotensin II, a vasoconstricting peptide, which acts as a key regulator of blood pressure and sodium retention by the kidney. The activated receptor in turn couples to G-alpha proteins G(q) (GNAQ, GNA11, GNA14 or GNA15) and thus activates phospholipase C and increases the cytosolic Ca(2+) concentrations, which in turn triggers cellular responses such as stimulation of protein kinase C. The chain is Type-1 angiotensin II receptor A (agtr1-a) from Xenopus laevis (African clawed frog).